The primary structure comprises 788 residues: Cadherin-10 (788 aa).

A signal peptide spans Met1–Pro22. Positions Glu23–Arg54 are excised as a propeptide. The Extracellular segment spans residues Glu23–Ala613. 5 consecutive Cadherin domains span residues Trp56–Phe160, Pro161–Phe269, Pro270–Phe384, Ser385–Phe489, and Phe489–Leu603. Asn256 is a glycosylation site (N-linked (GlcNAc...) asparagine). Residues Asn456 and Asn534 are each glycosylated (N-linked (GlcNAc...) asparagine). Residues Leu614–Leu634 traverse the membrane as a helical segment. Topologically, residues Lys635–Ala788 are cytoplasmic. Position 784 is a phosphoserine (Ser784).

It is found in the cell membrane. In terms of biological role, cadherins are calcium-dependent cell adhesion proteins. They preferentially interact with themselves in a homophilic manner in connecting cells; cadherins may thus contribute to the sorting of heterogeneous cell types. The polypeptide is Cadherin-10 (Cdh10) (Mus musculus (Mouse)).